A 565-amino-acid chain; its full sequence is Sulfite reductase [NADPH] hemoprotein beta-component (565 aa).

4 residues coordinate [4Fe-4S] cluster: cysteine 429, cysteine 435, cysteine 474, and cysteine 478. Cysteine 478 contributes to the siroheme binding site.

Belongs to the nitrite and sulfite reductase 4Fe-4S domain family. In terms of assembly, alpha(8)-beta(8). The alpha component is a flavoprotein, the beta component is a hemoprotein. It depends on siroheme as a cofactor. The cofactor is [4Fe-4S] cluster.

It carries out the reaction hydrogen sulfide + 3 NADP(+) + 3 H2O = sulfite + 3 NADPH + 4 H(+). It functions in the pathway sulfur metabolism; hydrogen sulfide biosynthesis; hydrogen sulfide from sulfite (NADPH route): step 1/1. Component of the sulfite reductase complex that catalyzes the 6-electron reduction of sulfite to sulfide. This is one of several activities required for the biosynthesis of L-cysteine from sulfate. In Pseudoalteromonas translucida (strain TAC 125), this protein is Sulfite reductase [NADPH] hemoprotein beta-component.